The following is a 180-amino-acid chain: Large ribosomal subunit protein uL5 (180 aa).

This sequence belongs to the universal ribosomal protein uL5 family. In terms of assembly, part of the 50S ribosomal subunit; part of the 5S rRNA/L5/L18/L25 subcomplex. Contacts the 5S rRNA and the P site tRNA. Forms a bridge to the 30S subunit in the 70S ribosome.

In terms of biological role, this is one of the proteins that bind and probably mediate the attachment of the 5S RNA into the large ribosomal subunit, where it forms part of the central protuberance. In the 70S ribosome it contacts protein S13 of the 30S subunit (bridge B1b), connecting the 2 subunits; this bridge is implicated in subunit movement. Contacts the P site tRNA; the 5S rRNA and some of its associated proteins might help stabilize positioning of ribosome-bound tRNAs. This is Large ribosomal subunit protein uL5 from Cupriavidus metallidurans (strain ATCC 43123 / DSM 2839 / NBRC 102507 / CH34) (Ralstonia metallidurans).